A 281-amino-acid chain; its full sequence is Pantothenate synthetase (281 aa).

30–37 (MGNLHQGH) contacts ATP. His37 serves as the catalytic Proton donor. Gln61 is a (R)-pantoate binding site. A beta-alanine-binding site is contributed by Gln61. Residue 149–152 (GNKD) coordinates ATP. Gln155 contributes to the (R)-pantoate binding site. ATP is bound by residues Ile178 and 186 to 189 (MSSR).

The protein belongs to the pantothenate synthetase family. As to quaternary structure, homodimer.

It localises to the cytoplasm. It carries out the reaction (R)-pantoate + beta-alanine + ATP = (R)-pantothenate + AMP + diphosphate + H(+). It functions in the pathway cofactor biosynthesis; (R)-pantothenate biosynthesis; (R)-pantothenate from (R)-pantoate and beta-alanine: step 1/1. Functionally, catalyzes the condensation of pantoate with beta-alanine in an ATP-dependent reaction via a pantoyl-adenylate intermediate. The protein is Pantothenate synthetase of Shewanella oneidensis (strain ATCC 700550 / JCM 31522 / CIP 106686 / LMG 19005 / NCIMB 14063 / MR-1).